The primary structure comprises 136 residues: Large ribosomal subunit protein uL16 (136 aa).

This sequence belongs to the universal ribosomal protein uL16 family. In terms of assembly, part of the 50S ribosomal subunit.

In terms of biological role, binds 23S rRNA and is also seen to make contacts with the A and possibly P site tRNAs. The chain is Large ribosomal subunit protein uL16 from Haemophilus ducreyi (strain 35000HP / ATCC 700724).